Reading from the N-terminus, the 150-residue chain is Protein E6 (150 aa).

2 zinc fingers span residues 31–67 and 104–140; these read CVFC…CACC and CYLC…CFHC.

The protein belongs to the papillomaviridae E6 protein family. Forms homodimers. Interacts with ubiquitin-protein ligase UBE3A/E6-AP; this interaction stimulates UBE3A ubiquitin activity. Interacts with host TP53 and EP300; this interaction inhibits TP53 activity.

The protein localises to the host cytoplasm. It localises to the host nucleus. Its function is as follows. Plays a major role in the induction and maintenance of cellular transformation. E6 associates with host UBE3A/E6-AP ubiquitin-protein ligase and modulates its activity. Sequesters tumor suppressor TP53 in the host cytoplasm and modulates its activity by interacting with host EP300 that results in the reduction of TP53 acetylation and activation. In turn, apoptosis induced by DNA damage is inhibited. E6 also protects host keratinocytes from apoptosis by mediating the degradation of host BAK1. May also inhibit host immune response. The polypeptide is Protein E6 (Pygmy chimpanzee papillomavirus type 1 (PCPV-1)).